A 214-amino-acid polypeptide reads, in one-letter code: Uracil phosphoribosyltransferase (214 aa).

5-phospho-alpha-D-ribose 1-diphosphate contacts are provided by residues Arg-81, Arg-106, and 133–141; that span reads DPMLATGNS. Uracil-binding positions include Ile-196 and 201–203; that span reads GDA. Asp-202 contacts 5-phospho-alpha-D-ribose 1-diphosphate.

This sequence belongs to the UPRTase family. Mg(2+) serves as cofactor.

The enzyme catalyses UMP + diphosphate = 5-phospho-alpha-D-ribose 1-diphosphate + uracil. It participates in pyrimidine metabolism; UMP biosynthesis via salvage pathway; UMP from uracil: step 1/1. With respect to regulation, allosterically activated by GTP. In terms of biological role, catalyzes the conversion of uracil and 5-phospho-alpha-D-ribose 1-diphosphate (PRPP) to UMP and diphosphate. The polypeptide is Uracil phosphoribosyltransferase (Legionella pneumophila (strain Paris)).